We begin with the raw amino-acid sequence, 99 residues long: SAGA-associated factor 11 (99 aa).

Residues 71-92 (IHCENCGRDVSANRLAAHLQRC) form an SGF11-type zinc finger.

Belongs to the SGF11 family. As to quaternary structure, component of the 1.8 MDa SAGA transcription coactivator-HAT complex. SAGA is built of 5 distinct domains with specialized functions. Within the SAGA complex, SUS1, SGF11, SGF73 and UBP8 form an additional subcomplex of SAGA called the DUB module (deubiquitination module). Interacts directly with SGF73, SUS1 and UBP8.

It localises to the nucleus. Functions as a component of the transcription regulatory histone acetylation (HAT) complex SAGA. At the promoters, SAGA is required for recruitment of the basal transcription machinery. It influences RNA polymerase II transcriptional activity through different activities such as TBP interaction and promoter selectivity, interaction with transcription activators, and chromatin modification through histone acetylation and deubiquitination. SAGA acetylates nucleosomal histone H3 to some extent (to form H3K9ac, H3K14ac, H3K18ac and H3K23ac). SAGA interacts with DNA via upstream activating sequences (UASs). Involved in transcriptional regulation of a subset of SAGA-regulated genes. Within the SAGA complex, participates in a subcomplex, that specifically deubiquitinates histones H2B. This chain is SAGA-associated factor 11, found in Saccharomyces cerevisiae (strain RM11-1a) (Baker's yeast).